The primary structure comprises 139 residues: Protein cornichon homolog 4 (139 aa).

The next 3 membrane-spanning stretches (helical) occupy residues 5-25 (VFVF…YFII), 57-77 (LVTV…NLPV), and 118-138 (LGFH…ALIN).

Belongs to the cornichon family. Interacts with Sec23/24 complex components SEC24B and SEC24D. Interacts with CCR5. Interacts with ADRB2 in the early secretory pathway.

The protein resides in the membrane. It localises to the endoplasmic reticulum. It is found in the endoplasmic reticulum-Golgi intermediate compartment. In terms of biological role, involved in G protein-coupled receptors (GPCRs) trafficking from the endoplasmic reticulum to the cell surface; it promotes the exit of GPCRs from the early secretory pathway, likely through interaction with the COPII machinery. This chain is Protein cornichon homolog 4 (CNIH4), found in Bos taurus (Bovine).